A 594-amino-acid chain; its full sequence is Glutamate decarboxylase 1 (594 aa).

Low complexity predominate over residues 1–13 (MASSTPSSSATSS). Positions 1-23 (MASSTPSSSATSSNAGADPNTTN) are disordered. Ser78 carries the post-translational modification Phosphoserine. 190–192 (QLS) provides a ligand contact to 4-aminobutanoate. The residue at position 405 (Lys405) is an N6-(pyridoxal phosphate)lysine. Arg567 is a binding site for 4-aminobutanoate.

Belongs to the group II decarboxylase family. As to quaternary structure, homodimer. The cofactor is pyridoxal 5'-phosphate.

The enzyme catalyses L-glutamate + H(+) = 4-aminobutanoate + CO2. Functionally, catalyzes the synthesis of the inhibitory neurotransmitter gamma-aminobutyric acid (GABA) with pyridoxal 5'-phosphate as cofactor. In Pongo abelii (Sumatran orangutan), this protein is Glutamate decarboxylase 1 (GAD1).